The chain runs to 2053 residues: Cell adhesion molecule DSCAML1 (2053 aa).

Residues 1 to 18 (MWLVTFLLLLDSLHKARP) form the signal peptide. 9 Ig-like C2-type domains span residues 19-119 (EDVG…NIRI), 115-217 (PNIR…ARLS), 226-310 (PTIL…GILT), 314-396 (PLHV…QTAQ), 408-501 (PRIV…ARIN), 506-586 (PSIR…LSIS), 596-685 (PPLI…RQLI), 690-784 (PRFV…MFLT), and 788-885 (PAMI…LTVQ). The Extracellular portion of the chain corresponds to 19 to 1591 (EDVGTSLYFV…AQGEGDDVKK (1573 aa)). Intrachain disulfides connect Cys47–Cys103, Cys146–Cys198, Cys247–Cys294, Cys336–Cys386, Cys429–Cys485, Cys526–Cys575, and Cys617–Cys669. Residue Asn79 is glycosylated (N-linked (GlcNAc...) asparagine). Residues Asn368 and Asn471 are each glycosylated (N-linked (GlcNAc...) asparagine). Asn666 and Asn710 each carry an N-linked (GlcNAc...) asparagine glycan. Cysteines 711 and 767 form a disulfide. The N-linked (GlcNAc...) asparagine glycan is linked to Asn809. Cysteines 810 and 867 form a disulfide. 4 Fibronectin type-III domains span residues 887-984 (PPDP…TEEA), 989-1088 (PPMD…TLED), 1093-1189 (PPEN…TKED), and 1193-1288 (PPAG…AGKA). Asn1144 and Asn1162 each carry an N-linked (GlcNAc...) asparagine glycan. The Ig-like C2-type 10 domain occupies 1278-1377 (EKVTIEPAGK…TGGFDTIIVN (100 aa)). Residues Cys1311 and Cys1363 are joined by a disulfide bond. Asn1345 is a glycosylation site (N-linked (GlcNAc...) asparagine). 2 consecutive Fibronectin type-III domains span residues 1383–1477 (PPDQ…THGR) and 1478–1578 (EPSF…TIPP). The N-linked (GlcNAc...) asparagine glycan is linked to Asn1561. Residues 1592 to 1612 (LFTIGCPVILATLGVALLFVV) traverse the membrane as a helical segment. Topologically, residues 1613–2053 (RKKRKEKRLK…GAYSKSYTLV (441 aa)) are cytoplasmic. 4 disordered regions span residues 1716–1741 (LIDMSDIRPGTNPVSRKNVKSAHSTR), 1773–1803 (HGVTVTESDSYSASLSQDTDKGRNSMVSTES), 1840–1862 (SSDQMTTGTNENADSMTSMSTPS), and 1974–2053 (LAMP…YTLV). A compositionally biased stretch (basic residues) spans 1732-1741 (KNVKSAHSTR). Residues 1773–1789 (HGVTVTESDSYSASLSQ) are compositionally biased toward polar residues. Residues 1977 to 1993 (PAPPAGTAPPAPGPTPS) show a composition bias toward pro residues.

As to quaternary structure, homodimer; mediates homophilic interactions to promote cell adhesion. In terms of tissue distribution, in the retina, expressed in the rod photoreceptors, AII amacrine cells and rod bipolar cells (at protein level).

The protein resides in the cell membrane. Its subcellular location is the synapse. Functionally, cell adhesion molecule that plays a role in neuronal self-avoidance. Promotes repulsion between specific neuronal processes of either the same cell or the same subtype of cells. Promotes both isoneuronal self-avoidance for creating an orderly neurite arborization in retinal rod bipolar cells and heteroneuronal self-avoidance to maintain mosaic spacing between AII amacrine cells. Adhesion molecule that promotes lamina-specific synaptic connections in the retina: expressed in specific subsets of interneurons and retinal ganglion cells (RGCs) and promotes synaptic connectivity via homophilic interactions. This Mus musculus (Mouse) protein is Cell adhesion molecule DSCAML1 (Dscaml1).